The sequence spans 2535 residues: Piezo-type mechanosensitive ion channel component 1 (2535 aa).

The next 3 helical transmembrane spans lie at 13–25 (LLLPCTLLAASLL), 29–44 (ALSLVYLLFLLLLPWL), and 59–81 (LLRALLCLSLLFLVAHVAFQICL). Residue asparagine 100 is glycosylated (N-linked (GlcNAc...) asparagine). Transmembrane regions (helical) follow at residues 122–138 (VAPDLGVLVASSLCLGL), 193–212 (LLVTSGRMLVIVLLALAGIA), 215–234 (SAFSSVYLMVFLAICTWWSC), 246–266 (LCVMVSCFGAGHLVCLYCYQT), and 308–328 (WPIYVSPGILLLLYYTATSLL). The segment covering 346–357 (DEEHELELDQLE) has biased composition (acidic residues). The segment at 346–377 (DEEHELELDQLEPEPQARGTTQGATPTTTGPD) is disordered. Residues 358–376 (PEPQARGTTQGATPTTTGP) show a composition bias toward low complexity. Residue asparagine 380 is glycosylated (N-linked (GlcNAc...) asparagine). The next 8 helical transmembrane spans lie at 416–436 (LILDQSYVCALIAMMVWSIMY), 439–454 (WLTFVLLLWACLIWTV), 460–482 (LAMLCSPCILLYGLTLCCLRYVW), 510–527 (CLDLGAMLLYLLTFWLLL), 572–592 (IYVKYWIYVCAGMFIVVSFAG), 594–614 (LVVYKIVYMFLFLLCLTLFQV), 625–646 (VFWWLVVAYTMLVLIAVYTFQF), and 677–693 (LFSSILIPGFFLLACIL). Position 749 is a phosphoserine (serine 749). 12 helical membrane passes run 803–814 (LVALYTVWVALK), 818–831 (VMNLLLVVLWAFAL), 846–860 (VWTCIIIVCKMLYQL), 913–940 (GYIQNHLQILLLLVFEAVVYRRQEHYRR), 981–996 (GLEICFLMAVNVIGQR), 999–1014 (FMVILHGCWLVAILTR), 1028–1043 (CLFLTLFLLYQYLLCL), 1083–1104 (TNLISDFLLLLCASQQWQVFSA), 1140–1166 (YLDMLKVAVFRYLFWLVLVVVFVTGAT), 1172–1190 (GLGYLLACFYLLLFGTTLL), 1204–1222 (LILYNVTVIISKNMLSLLS), and 1272–1288 (IWDSICFFFLLLQRRVF). The stretch at 1325–1356 (HRQTEERSLAQLKRQMKRIRAKQEKYRQSQAS) forms a coiled coil. 2 disordered regions span residues 1345 to 1383 (AKQEKYRQSQASRGQLQSTDPQEPGPDSPGGSSPPRTQW) and 1556 to 1597 (SGPV…NTRS). Residues 1352–1365 (QSQASRGQLQSTDP) show a composition bias toward polar residues. Phosphoserine is present on residues serine 1372 and serine 1377. A compositionally biased stretch (polar residues) spans 1579 to 1597 (SSMTDDTGSPLSTGYNTRS). Phosphoserine occurs at positions 1614, 1618, and 1633. 4 helical membrane passes run 1644–1687 (PELE…LNHM), 1692–1707 (AASLVLPVLVFLWAML), 1716–1734 (FWMTAIVFTEVMVVTKYLF), and 1767–1788 (DSYIKYDLVQLMALFFHRSQLL). Composition is skewed to basic and acidic residues over residues 1801–1811 (PKDHCRSSEKD) and 1842–1867 (PKDHIQGKGSVRSKDEIQDPPEDLKP). The interval 1801 to 1911 (PKDHCRSSEK…GREAAGRKRL (111 aa)) is disordered. Over residues 1868–1881 (QHRRHISIRFRRRK) the composition is skewed to basic residues. The next 5 membrane-spanning stretches (helical) occupy residues 1965–1984 (YALMFLADIVDIVVIIFGFW), 2005–2021 (PQAFLFMLLVQFGTMVI), 2036–2056 (AFQVVLVVAIHLWMFFILPAV), 2065–2080 (AVAQLWYFVKCIYFAL), and 2181–2201 (GLIILFLIAIIWFPLLFMSLI). Cysteine 2425 and cysteine 2429 are joined by a disulfide. The chain crosses the membrane as a helical span at residues 2446–2466 (LGFLAGYGIVGLYVSIVLVVG).

It belongs to the PIEZO (TC 1.A.75) family. In terms of assembly, homotrimer; the homotrimer forms a propeller-shaped Piezo channel with a cation-ion conducting pore. Heterotrimeric interaction may occur between PIEZO1 and PIEZO2. Interacts with PKD2. Interacts with STOM13. Interacts with TMC1, TMC2, PCDH15 and CIB2; the interaction may be part of the MET complex. Interacts with MDFIC (via C-terminus); the interaction prolongs Piezo channel inactivation. Interacts with MDFI (via C-terminus); the interaction prolongs Piezo channel inactivation. In terms of tissue distribution, moderate expression in lung and kidney. Very weak expression in heart, spleen and liver.

The protein localises to the endoplasmic reticulum membrane. It is found in the endoplasmic reticulum-Golgi intermediate compartment membrane. Its subcellular location is the cell membrane. It localises to the cell projection. The protein resides in the lamellipodium membrane. It catalyses the reaction K(+)(in) = K(+)(out). It carries out the reaction Na(+)(in) = Na(+)(out). The enzyme catalyses Ca(2+)(in) = Ca(2+)(out). The catalysed reaction is Mg(2+)(in) = Mg(2+)(out). With respect to regulation, regulated by auxillary subunits MDFIC and MDFI. Down-regulated by phosphatidylserines exposed on the cell surface. Divalent ions decrease the single-channel permeability of K(+). In terms of biological role, pore-forming subunit of the mechanosensitive non-specific cation Piezo channel required for rapidly adapting mechanically activated (MA) currents and has a key role in sensing touch and tactile pain. Piezo channels are homotrimeric three-blade propeller-shaped structures that utilize a cap-motion and plug-and-latch mechanism to gate their ion-conducting pathways. Generates currents characterized by a linear current-voltage relationship that are sensitive to ruthenium red and gadolinium. Conductance to monovalent alkali ions is highest for K(+), intermediate for Na(+) and lowest for Li(+). Divalent ions except for Mn(2+) permeate the channel but more slowly than the monovalent ions and they also reduce K(+) currents. Plays a key role in epithelial cell adhesion by maintaining integrin activation through R-Ras recruitment to the ER, most probably in its activated state, and subsequent stimulation of calpain signaling. In inner ear hair cells, PIEZO1/2 subunits may constitute part of the mechanotransducer (MET) non-selective cation channel complex where they may act as pore-forming ion-conducting component in the complex. In the kidney, may contribute to the detection of intraluminal pressure changes and to urine flow sensing. Acts as a shear-stress sensor that promotes endothelial cell organization and alignment in the direction of blood flow through calpain activation. Plays a key role in blood vessel formation and vascular structure in both development and adult physiology. Acts as a sensor of phosphatidylserine (PS) flipping at the plasma membrane and governs morphogenesis of muscle cells. In myoblasts, flippase-mediated PS enrichment at the inner leaflet of plasma membrane triggers channel activation and Ca(2+) influx followed by Rho GTPases signal transduction, leading to assembly of cortical actomyosin fibers and myotube formation. The sequence is that of Piezo-type mechanosensitive ion channel component 1 (Piezo1) from Rattus norvegicus (Rat).